The primary structure comprises 243 residues: Small ribosomal subunit protein uS3 (243 aa).

The region spanning 39–107 (LRKLISKELQ…KIKLNIKEIH (69 aa)) is the KH type-2 domain. Residues 212-243 (VAKSPAEPATTAPTPAPERRERQPRRNSNASA) are disordered.

This sequence belongs to the universal ribosomal protein uS3 family. As to quaternary structure, part of the 30S ribosomal subunit. Forms a tight complex with proteins S10 and S14.

Binds the lower part of the 30S subunit head. Binds mRNA in the 70S ribosome, positioning it for translation. The protein is Small ribosomal subunit protein uS3 of Chloroflexus aurantiacus (strain ATCC 29364 / DSM 637 / Y-400-fl).